The sequence spans 238 residues: Ion-translocating oxidoreductase complex subunit E (238 aa).

Transmembrane regions (helical) follow at residues 41–61 (LGLG…VSLV), 71–91 (LPAF…LMQA), 95–115 (ELYQ…VILG), 130–150 (SFDG…LGGL), and 184–204 (GFLL…LIAL).

Belongs to the NqrDE/RnfAE family. As to quaternary structure, the complex is composed of six subunits: RnfA, RnfB, RnfC, RnfD, RnfE and RnfG.

The protein resides in the cell inner membrane. Functionally, part of a membrane-bound complex that couples electron transfer with translocation of ions across the membrane. The protein is Ion-translocating oxidoreductase complex subunit E of Pseudomonas aeruginosa (strain LESB58).